Here is a 305-residue protein sequence, read N- to C-terminus: tRNA dimethylallyltransferase (305 aa).

Residue G8–S15 participates in ATP binding. Position 10–15 (T10–S15) interacts with substrate.

The protein belongs to the IPP transferase family. In terms of assembly, monomer. It depends on Mg(2+) as a cofactor.

It catalyses the reaction adenosine(37) in tRNA + dimethylallyl diphosphate = N(6)-dimethylallyladenosine(37) in tRNA + diphosphate. Functionally, catalyzes the transfer of a dimethylallyl group onto the adenine at position 37 in tRNAs that read codons beginning with uridine, leading to the formation of N6-(dimethylallyl)adenosine (i(6)A). The protein is tRNA dimethylallyltransferase of Mycobacterium sp. (strain JLS).